Consider the following 1763-residue polypeptide: Genome polyprotein (1763 aa).

An SF3 helicase domain is found at D458–T614. ATP is bound at residue G484–T491. The acidic stretch occupies residues D981–E986. Y984 is subject to O-(5'-phospho-RNA)-tyrosine. Phosphothreonine is present on T1040. Residue S1067 is modified to Phosphoserine. Positions G1073–D1229 constitute a Peptidase C24 domain. Catalysis depends on for 3CLpro activity residues H1110, E1131, and C1193. Residues A1478–S1603 enclose the RdRp catalytic domain.

Homodimer. Interacts with NTPase, protein p30 and protease-polymerase p76. As to quaternary structure, interacts with capsid protein VP1 and protease-polymerase p76. Interacts with host IEF4e; this interaction plays a role in translation of viral proteins. In terms of assembly, homooligomer. Interacts with Vpg, protein p32 and may interact with capsid protein VP1. In terms of processing, specific enzymatic cleavages in vivo yield mature proteins. Pro-Pol is first autocatalytically cleaved, then processes the whole polyprotein. Post-translationally, VPg is uridylylated by the polymerase and is covalently attached to the 5'-end of the polyadenylated genomic and subgenomic RNAs. This uridylylated form acts as a nucleotide-peptide primer for the polymerase.

Its subcellular location is the host endoplasmic reticulum membrane. The catalysed reaction is a ribonucleoside 5'-triphosphate + H2O = a ribonucleoside 5'-diphosphate + phosphate + H(+). It carries out the reaction RNA(n) + a ribonucleoside 5'-triphosphate = RNA(n+1) + diphosphate. The enzyme catalyses Endopeptidase with a preference for cleavage when the P1 position is occupied by Glu-|-Xaa and the P1' position is occupied by Gly-|-Yaa.. In terms of biological role, together with NTPase and NS4, initiates the formation of the replication complex. Induces the proliferation of the host smooth ER membranes forming long tubular structures. These remodeled membranes probably form the viral factories that contain the replication complex. Its function is as follows. Displays NTPase activity, but no helicase activity. Induces the formation of convoluted membranes derived from the host ER. These remodeled membranes probably form the viral factories that contain the replication complex. Together with NS2 and NS4, initiates the formation of the replication complex. Probable key protein responsible for the formation of membrane alterations by the virus. Induces the formation of convoluted membranes derived from the host ER. These remodeled membranes probably form the viral factories that contain the replication complex. Together with NS2 and NTPase, initiates the formation of the replication complex. Functionally, viral genome-linked protein is covalently linked to the 5'-end of the positive-strand, negative-strand genomic RNAs and subgenomic RNA. Acts as a genome-linked replication primer. May recruit ribosome to viral RNA thereby promoting viral proteins translation. Interacts with host translation initiation complex to allow the translation of viral proteins. In terms of biological role, protease-polymerase p76 processes the polyprotein: Pro-Pol is first released by autocleavage, then all other proteins are cleaved. Cleaves host translation initiation factor eIF4G1, eIF4G2 and PABP1 thereby inducing a shutdown of host protein synthesis. This shutdown may not prevent viral mRNA from being translated since viral Vpg replaces the cap. It is also an RNA-directed RNA polymerase which replicates genomic and antigenomic viral RNA by recognizing specific signals. Also transcribes a subgenomic mRNA by initiating RNA synthesis internally on antigenomic RNA. This sgRNA codes for structural proteins. Catalyzes the covalent attachment VPg with viral RNAs. Cleaves host G3BP1 thereby preventing the assembly of host stress granules. The chain is Genome polyprotein from Felidae (cat family).